A 543-amino-acid polypeptide reads, in one-letter code: Ipecac alkaloid beta-glucosidase 3 (543 aa).

A beta-D-glucoside-binding positions include glutamine 36, histidine 140, 185–186 (NE), tyrosine 350, glutamate 422, tryptophan 471, and phenylalanine 487. Catalysis depends on glutamate 186, which acts as the Proton donor. Glutamate 422 functions as the Nucleophile in the catalytic mechanism.

The protein belongs to the glycosyl hydrolase 1 family.

It is found in the cytoplasm. It localises to the cytosol. It catalyses the reaction deacetylipecoside + H2O = deacetylipecoside aglycone + D-glucose. It carries out the reaction deacetylisoipecoside + H2O = deacetylisoipecoside aglycone + D-glucose. It participates in alkaloid biosynthesis. In terms of biological role, beta-glucosidase catalyzing deglucosylation on N-deacetylisoipecoside and N-deacetylipecoside. This is Ipecac alkaloid beta-glucosidase 3 from Carapichea ipecacuanha (Ipecac).